The chain runs to 445 residues: Phosphoglucosamine mutase (445 aa).

S102 acts as the Phosphoserine intermediate in catalysis. Residues S102, D241, D243, and D245 each contribute to the Mg(2+) site. Position 102 is a phosphoserine (S102).

Belongs to the phosphohexose mutase family. Mg(2+) serves as cofactor. Post-translationally, activated by phosphorylation.

It catalyses the reaction alpha-D-glucosamine 1-phosphate = D-glucosamine 6-phosphate. Its function is as follows. Catalyzes the conversion of glucosamine-6-phosphate to glucosamine-1-phosphate. This chain is Phosphoglucosamine mutase, found in Escherichia coli (strain 55989 / EAEC).